The chain runs to 123 residues: PTS system glucitol/sorbitol-specific EIIA component (123 aa).

The region spanning 3 to 116 (VIYQTTITRI…PDDIAPGSVL (114 aa)) is the PTS EIIA type-5 domain. The Tele-phosphohistidine intermediate role is filled by His-43. His-43 carries the phosphohistidine; by HPr modification.

It localises to the cytoplasm. Its function is as follows. The phosphoenolpyruvate-dependent sugar phosphotransferase system (sugar PTS), a major carbohydrate active transport system, catalyzes the phosphorylation of incoming sugar substrates concomitantly with their translocation across the cell membrane. The enzyme II complex composed of SrlA, SrlB and SrlE is involved in glucitol/sorbitol transport. It can also use D-mannitol. This chain is PTS system glucitol/sorbitol-specific EIIA component (srlB), found in Escherichia coli (strain K12).